Consider the following 98-residue polypeptide: Cell division topological specificity factor (98 aa).

The protein belongs to the MinE family.

Functionally, prevents the cell division inhibition by proteins MinC and MinD at internal division sites while permitting inhibition at polar sites. This ensures cell division at the proper site by restricting the formation of a division septum at the midpoint of the long axis of the cell. In Nitrosomonas europaea (strain ATCC 19718 / CIP 103999 / KCTC 2705 / NBRC 14298), this protein is Cell division topological specificity factor.